The primary structure comprises 337 residues: Cholinesterase 2 (337 aa).

The Acyl-ester intermediate role is filled by Ser99. Cys153 and Cys165 are joined by a disulfide. Catalysis depends on Glu224, which acts as the Charge relay system. The N-linked (GlcNAc...) asparagine glycan is linked to Asn290.

It belongs to the type-B carboxylesterase/lipase family.

It carries out the reaction an acylcholine + H2O = a carboxylate + choline + H(+). The chain is Cholinesterase 2 (CHE2) from Branchiostoma lanceolatum (Common lancelet).